Reading from the N-terminus, the 733-residue chain is Polyribonucleotide nucleotidyltransferase (733 aa).

Mg(2+) is bound by residues Asp-488 and Asp-494. One can recognise a KH domain in the interval 555-614 (PRIEVMNIAVDKIRDVIGTGGKVIREIVEQTGAKINIEDDGTIRIASADAKTIEAAKRWI). The region spanning 624–692 (GVIYQGTVVK…ERGKVRLSMK (69 aa)) is the S1 motif domain. A compositionally biased stretch (basic and acidic residues) spans 711–722 (EQEKYTEETHKS). Residues 711-733 (EQEKYTEETHKSENKRRRKKKEE) form a disordered region. Residues 723-733 (ENKRRRKKKEE) show a composition bias toward basic residues.

The protein belongs to the polyribonucleotide nucleotidyltransferase family. It depends on Mg(2+) as a cofactor.

The protein resides in the cytoplasm. The catalysed reaction is RNA(n+1) + phosphate = RNA(n) + a ribonucleoside 5'-diphosphate. In terms of biological role, involved in mRNA degradation. Catalyzes the phosphorolysis of single-stranded polyribonucleotides processively in the 3'- to 5'-direction. The polypeptide is Polyribonucleotide nucleotidyltransferase (Bartonella henselae (strain ATCC 49882 / DSM 28221 / CCUG 30454 / Houston 1) (Rochalimaea henselae)).